The following is a 364-amino-acid chain: MSNDSFFNNDWLELQRKYWDSWSEMGRKAMGLENQQTLTTPWEGALDHWWKAMSPATPDFSKTFMEKMMEQGKNFFRMAETFANTPEDTTATNGLTWWTKALEDMQKQFSGSLDDGGNSMQRMMSFWELPIDNWQRMMSSMSPMPGDMLRNMPHEQLKDRSGRALSAPGLGYTREEQSQYHQLTRTAMDYQAALQEYTGFYSQLGMKSVERMGDFIQGVIDSGKSIDSARTLYDNWISCCETVYAAEVATPEYAQIHGRLVNAQMALKRRMAIMVDENLGAMNMPTRSELRTLQDRLQETRRDNKQLHRALHALEKQVAALSGKTPTTALKAPAPATKATEKPATRATTRRKTAAKPTGGTADD.

The tract at residues 322–364 (SGKTPTTALKAPAPATKATEKPATRATTRRKTAAKPTGGTADD) is disordered. Residues 324 to 338 (KTPTTALKAPAPATK) show a composition bias toward low complexity.

It belongs to the PHA/PHB synthase family. Type III PhaE subfamily. As to quaternary structure, forms a heterodimer with PhaC, which may multimerize in the presence of 3-hydroxybutyryl-CoA.

It is found in the cytoplasm. It functions in the pathway biopolymer metabolism; poly-(R)-3-hydroxybutanoate biosynthesis. In terms of biological role, polymerizes D(-)-3-hydroxybutyryl-CoA to create polyhydroxybutyrate (PHB) which consists of thousands of hydroxybutyrate molecules linked end to end. This subunit has no catalytic activity but enhances the activity of PhaC, the catalytic subunit. The sequence is that of Poly(3-hydroxyalkanoate) polymerase subunit PhaE from Thiocystis violacea.